Consider the following 189-residue polypeptide: Peptidyl-tRNA hydrolase (189 aa).

Residue Y14 coordinates tRNA. The active-site Proton acceptor is the H19. 3 residues coordinate tRNA: Y64, N66, and N112.

The protein belongs to the PTH family. Monomer.

It localises to the cytoplasm. The catalysed reaction is an N-acyl-L-alpha-aminoacyl-tRNA + H2O = an N-acyl-L-amino acid + a tRNA + H(+). Hydrolyzes ribosome-free peptidyl-tRNAs (with 1 or more amino acids incorporated), which drop off the ribosome during protein synthesis, or as a result of ribosome stalling. In terms of biological role, catalyzes the release of premature peptidyl moieties from peptidyl-tRNA molecules trapped in stalled 50S ribosomal subunits, and thus maintains levels of free tRNAs and 50S ribosomes. This is Peptidyl-tRNA hydrolase from Finegoldia magna (strain ATCC 29328 / DSM 20472 / WAL 2508) (Peptostreptococcus magnus).